A 354-amino-acid chain; its full sequence is Trans-L-3-hydroxyproline dehydratase (354 aa).

Cys104 acts as the Proton acceptor in catalysis. Substrate contacts are provided by residues 105-106, Asp269, and 274-275; these read GH and GS.

It belongs to the proline racemase family. Homodimer.

It carries out the reaction trans-3-hydroxy-L-proline = 1-pyrroline-2-carboxylate + H2O. Catalyzes the dehydration of trans-3-hydroxy-L-proline to delta-1-pyrroline-2-carboxylate (Pyr2C). This Pongo abelii (Sumatran orangutan) protein is Trans-L-3-hydroxyproline dehydratase (L3HYPDH).